Reading from the N-terminus, the 165-residue chain is Cytochrome c-550-like protein (165 aa).

The N-terminal stretch at 1-38 (MPHLDQKLPMRWRIPSRLWAWVGILALLWLGLASPVAA) is a signal peptide. Heme c is bound by residues Cys-83, Cys-86, His-87, and Cys-137.

Belongs to the cytochrome c family. PsbV subfamily. Requires heme c as cofactor.

It localises to the cellular thylakoid membrane. Functionally, possible low-potential cytochrome c. This Synechococcus sp. (strain JA-2-3B'a(2-13)) (Cyanobacteria bacterium Yellowstone B-Prime) protein is Cytochrome c-550-like protein (psbV2).